Reading from the N-terminus, the 193-residue chain is ATP-dependent Clp protease proteolytic subunit (193 aa).

Serine 98 functions as the Nucleophile in the catalytic mechanism. Residue histidine 123 is part of the active site.

This sequence belongs to the peptidase S14 family. As to quaternary structure, fourteen ClpP subunits assemble into 2 heptameric rings which stack back to back to give a disk-like structure with a central cavity, resembling the structure of eukaryotic proteasomes.

It is found in the cytoplasm. The catalysed reaction is Hydrolysis of proteins to small peptides in the presence of ATP and magnesium. alpha-casein is the usual test substrate. In the absence of ATP, only oligopeptides shorter than five residues are hydrolyzed (such as succinyl-Leu-Tyr-|-NHMec, and Leu-Tyr-Leu-|-Tyr-Trp, in which cleavage of the -Tyr-|-Leu- and -Tyr-|-Trp bonds also occurs).. Cleaves peptides in various proteins in a process that requires ATP hydrolysis. Has a chymotrypsin-like activity. Plays a major role in the degradation of misfolded proteins. The protein is ATP-dependent Clp protease proteolytic subunit of Clostridium acetobutylicum (strain ATCC 824 / DSM 792 / JCM 1419 / IAM 19013 / LMG 5710 / NBRC 13948 / NRRL B-527 / VKM B-1787 / 2291 / W).